We begin with the raw amino-acid sequence, 642 residues long: Cysteine-rich receptor-like protein kinase 27 (642 aa).

Positions 1–24 (MASTSIMLSSFFSFFFLTFFVTYA) are cleaved as a signal peptide. Residues 25–274 (QQNVTVHTIC…QGKSKDRSKT (250 aa)) lie on the Extracellular side of the membrane. 7 N-linked (GlcNAc...) asparagine glycosylation sites follow: N27, N40, N44, N70, N145, N173, and N258. Gnk2-homologous domains lie at 29–130 (TVHT…SRII) and 136–240 (PVPF…VYPF). Residues 275–295 (LIFAVVPIVAIILGLVFLFIY) traverse the membrane as a helical segment. Over 296–642 (LKRRRKKKTL…DVSLTDLSAR (347 aa)) the chain is Cytoplasmic. A Protein kinase domain is found at 333-620 (FSLTNKIGEG…QLPKPSQPGF (288 aa)). ATP is bound by residues 339-347 (IGEGGFGVV) and K361. Y406 carries the phosphotyrosine modification. D458 acts as the Proton acceptor in catalysis. A Phosphoserine modification is found at S462. The residue at position 498 (T498) is a Phosphothreonine. Y506 carries the post-translational modification Phosphotyrosine.

The protein belongs to the protein kinase superfamily. Ser/Thr protein kinase family. CRK subfamily.

It is found in the membrane. The enzyme catalyses L-seryl-[protein] + ATP = O-phospho-L-seryl-[protein] + ADP + H(+). It catalyses the reaction L-threonyl-[protein] + ATP = O-phospho-L-threonyl-[protein] + ADP + H(+). The chain is Cysteine-rich receptor-like protein kinase 27 (CRK27) from Arabidopsis thaliana (Mouse-ear cress).